A 172-amino-acid chain; its full sequence is T-cell receptor gamma chain C region C7.5 (172 aa).

The tract at residues 1–140 is c region; the sequence is DKKLDADISP…QFTITSAYYT (140 aa). A helical transmembrane segment spans residues 141 to 160; it reads YLLLLLKSVIYLAIISFSLL. The Cytoplasmic portion of the chain corresponds to 161-172; sequence RRTSVCCNEKKS.

Its subcellular location is the membrane. The sequence is that of T-cell receptor gamma chain C region C7.5 from Mus musculus (Mouse).